A 650-amino-acid chain; its full sequence is NAC domain-containing protein 54 (650 aa).

The region spanning leucine 6 to lysine 156 is the NAC domain. Residues valine 105–lysine 162 mediate DNA binding.

As to expression, expressed in leaves, roots and flowers.

The protein resides in the nucleus. In terms of biological role, transcription factor that functions as a regulator of the jasmonate (JA) signaling pathway. May regulate the expression of genes encoding JA biosynthetic enzymes, such as lipoxygenase 7 (CM-LOX1), allene oxide synthase 2 (AOS2) and OPDA reductase 7 (OPR7). Involved in abscisic acid-induced leaf senescence. Activates the abscisic acid (ABA) signaling-associated gene ABI5 and the senescence-associated gene NYC1 by directly binding to the mitochondrial dysfunction motif (MDM) present in their promoters. Possesses transcriptional activator activity in yeast. Required for the multiplication of the rice dwarf virus (RDV). This chain is NAC domain-containing protein 54, found in Oryza sativa subsp. japonica (Rice).